The following is an 844-amino-acid chain: Protein translocase subunit SecA (844 aa).

Residues glutamine 89, 107-111, and aspartate 497 contribute to the ATP site; that span reads GEGKT. Residues cysteine 829, cysteine 831, cysteine 840, and histidine 841 each contribute to the Zn(2+) site.

This sequence belongs to the SecA family. In terms of assembly, monomer and homodimer. Part of the essential Sec protein translocation apparatus which comprises SecA, SecYEG and auxiliary proteins SecDF. Other proteins may also be involved. Zn(2+) is required as a cofactor.

The protein localises to the cell membrane. It is found in the cytoplasm. The catalysed reaction is ATP + H2O + cellular proteinSide 1 = ADP + phosphate + cellular proteinSide 2.. In terms of biological role, part of the Sec protein translocase complex. Interacts with the SecYEG preprotein conducting channel. Has a central role in coupling the hydrolysis of ATP to the transfer of proteins into and across the cell membrane, serving as an ATP-driven molecular motor driving the stepwise translocation of polypeptide chains across the membrane. This is Protein translocase subunit SecA from Streptococcus suis (strain 98HAH33).